We begin with the raw amino-acid sequence, 888 residues long: Autophagy-related protein 9 (888 aa).

Positions 1 to 170 (MASNIFSRIK…PYTTPMGPQP (170 aa)) are disordered. Residues 1–255 (MASNIFSRIK…CTRKMSGLWN (255 aa)) are Cytoplasmic-facing. Over residues 13-24 (SGGSQSFYQQLR) the composition is skewed to polar residues. Residues 28–38 (DPEYDPGLDEE) are compositionally biased toward acidic residues. Residues 123-143 (RATNPGSSRTPASVGPSSART) show a composition bias toward polar residues. Residues 256-276 (FAIWLYTFFFIWKCVQYFVEI) traverse the membrane as a helical segment. Over 277 to 422 (RRLTYIRDFY…RLLSQKLRQR (146 aa)) the chain is Lumenal. A helical transmembrane segment spans residues 423-443 (FLFAGFLNLLFAPVVLAYVVI). Topologically, residues 444–511 (VYFFTYYYEY…PKRITEAVAR (68 aa)) are cytoplasmic. An intramembrane segment occupies 512 to 532 (TIAFMSGAITAILAIGSVLDS). Residues 533 to 544 (ELFLNFEITKDR) are Cytoplasmic-facing. Residues 545–565 (PVIFYLGVFAAIWATTRGMVS) traverse the membrane as a helical segment. The Lumenal portion of the chain corresponds to 566–611 (EETLVFNPEYALRNVIEYTRYVPDHWKNKLHSSEVKQEFSELYKMK). The chain crosses the membrane as a helical span at residues 612–632 (VVIFLEEMMGIVTTPMLLLFS). At 633–642 (LPRCSDQIVD) the chain is on the cytoplasmic side. Residues 643-663 (FFREFTIHVDGLGYVCSFAVF) lie within the membrane without spanning it. Residues 664-888 (DFQKGPGNTG…QRPRRGGGMV (225 aa)) lie on the Cytoplasmic side of the membrane. 2 disordered regions span residues 748-770 (GRTGTETGRARSRAPGGRGPRIG) and 834-866 (EPGGALGESVWETSPARGVTRENSAANTEDPEA).

This sequence belongs to the ATG9 family. Homotrimer; forms a homotrimer with a central pore that forms a path between the two membrane leaflets. Post-translationally, phosphorylated by ATG1. ATG1 phosphorylation is required for ATG18 interaction and preautophagosome elongation.

It localises to the preautophagosomal structure membrane. The protein resides in the cytoplasmic vesicle membrane. It is found in the golgi apparatus membrane. Its subcellular location is the endoplasmic reticulum membrane. It catalyses the reaction a 1,2-diacyl-sn-glycero-3-phosphocholine(in) = a 1,2-diacyl-sn-glycero-3-phosphocholine(out). The catalysed reaction is a 1,2-diacyl-sn-glycero-3-phospho-L-serine(in) = a 1,2-diacyl-sn-glycero-3-phospho-L-serine(out). The enzyme catalyses a 1,2-diacyl-sn-glycero-3-phosphoethanolamine(in) = a 1,2-diacyl-sn-glycero-3-phosphoethanolamine(out). It carries out the reaction a 1,2-diacyl-sn-glycero-3-phospho-(1D-myo-inositol-3-phosphate)(in) = a 1,2-diacyl-sn-glycero-3-phospho-(1D-myo-inositol-3-phosphate)(out). Its function is as follows. Phospholipid scramblase involved in autophagy and cytoplasm to vacuole transport (Cvt) vesicle formation. Cycles between the preautophagosomal structure/phagophore assembly site (PAS) and the cytoplasmic vesicle pool and supplies membrane for the growing autophagosome. Lipid scramblase activity plays a key role in preautophagosomal structure/phagophore assembly by distributing the phospholipids that arrive through ATG2 from the cytoplasmic to the luminal leaflet of the bilayer, thereby driving autophagosomal membrane expansion. Required for mitophagy. Also involved in endoplasmic reticulum-specific autophagic process and is essential for the survival of cells subjected to severe ER stress. Different machineries are required for anterograde trafficking to the PAS during either the Cvt pathway or bulk autophagy and for retrograde trafficking. Autophagy is required for proper vegetative growth, asexual/sexual reproduction, and full virulence. Autophagy is particularly involved in the biosynthesis of deoxynivalenol (DON), an important virulence determinant. Required for aerial hyphae development and lipid droplet degradation in response to starvation. This chain is Autophagy-related protein 9, found in Gibberella zeae (strain ATCC MYA-4620 / CBS 123657 / FGSC 9075 / NRRL 31084 / PH-1) (Wheat head blight fungus).